A 358-amino-acid chain; its full sequence is F-box protein At4g35733 (358 aa).

An F-box domain is found at 4–51; that stretch reads ATVWSDLPGELLDHIANGLFSKVELLRFRSICKTFRSAVDSDKNFLDH.

As to quaternary structure, part of a SCF (ASK-cullin-F-box) protein ligase complex.

It participates in protein modification; protein ubiquitination. In terms of biological role, component of SCF(ASK-cullin-F-box) E3 ubiquitin ligase complexes, which may mediate the ubiquitination and subsequent proteasomal degradation of target proteins. This is F-box protein At4g35733 from Arabidopsis thaliana (Mouse-ear cress).